A 272-amino-acid chain; its full sequence is Putative pyruvate, phosphate dikinase regulatory protein (272 aa).

149–156 (GVSRTSKT) contributes to the ADP binding site.

This sequence belongs to the pyruvate, phosphate/water dikinase regulatory protein family. PDRP subfamily.

It carries out the reaction N(tele)-phospho-L-histidyl/L-threonyl-[pyruvate, phosphate dikinase] + ADP = N(tele)-phospho-L-histidyl/O-phospho-L-threonyl-[pyruvate, phosphate dikinase] + AMP + H(+). The enzyme catalyses N(tele)-phospho-L-histidyl/O-phospho-L-threonyl-[pyruvate, phosphate dikinase] + phosphate + H(+) = N(tele)-phospho-L-histidyl/L-threonyl-[pyruvate, phosphate dikinase] + diphosphate. In terms of biological role, bifunctional serine/threonine kinase and phosphorylase involved in the regulation of the pyruvate, phosphate dikinase (PPDK) by catalyzing its phosphorylation/dephosphorylation. The chain is Putative pyruvate, phosphate dikinase regulatory protein from Lactiplantibacillus plantarum (strain ATCC BAA-793 / NCIMB 8826 / WCFS1) (Lactobacillus plantarum).